A 176-amino-acid chain; its full sequence is MKNKTEYYDQFIAKVPDFPKKGVLFYDITSVLLKPEVYTSLINEAYSFYNLKKIDCIAVVESRGYLIGAPLSLKMQLPLVLIRKEGKLPREVFGEEYELEYGFGKIEVHKDDVRMYSNILLIDDILATGGTLKSSAILLERAGGRVKDIFCFIELCGINGRRILEDYDVNSLVRYN.

Belongs to the purine/pyrimidine phosphoribosyltransferase family. Homodimer.

It localises to the cytoplasm. It catalyses the reaction AMP + diphosphate = 5-phospho-alpha-D-ribose 1-diphosphate + adenine. It functions in the pathway purine metabolism; AMP biosynthesis via salvage pathway; AMP from adenine: step 1/1. In terms of biological role, catalyzes a salvage reaction resulting in the formation of AMP, that is energically less costly than de novo synthesis. In Borrelia garinii subsp. bavariensis (strain ATCC BAA-2496 / DSM 23469 / PBi) (Borreliella bavariensis), this protein is Adenine phosphoribosyltransferase.